Here is a 106-residue protein sequence, read N- to C-terminus: Large ribosomal subunit protein eL42A (106 aa).

At lysine 40 the chain carries N6-methyllysine; by RKM3. Lysine 55 carries the post-translational modification N6-methyllysine; by RKM4.

This sequence belongs to the eukaryotic ribosomal protein eL42 family. In terms of assembly, component of the large ribosomal subunit (LSU). Mature yeast ribosomes consist of a small (40S) and a large (60S) subunit. The 40S small subunit contains 1 molecule of ribosomal RNA (18S rRNA) and 33 different proteins (encoded by 57 genes). The large 60S subunit contains 3 rRNA molecules (25S, 5.8S and 5S rRNA) and 46 different proteins (encoded by 81 genes). In wild-type cells, 78% of L42 is monomethylated at both Lys-40 and Lys-55, and 22% are a mixture of species with either residue monomethylated.

The protein localises to the cytoplasm. Component of the ribosome, a large ribonucleoprotein complex responsible for the synthesis of proteins in the cell. The small ribosomal subunit (SSU) binds messenger RNAs (mRNAs) and translates the encoded message by selecting cognate aminoacyl-transfer RNA (tRNA) molecules. The large subunit (LSU) contains the ribosomal catalytic site termed the peptidyl transferase center (PTC), which catalyzes the formation of peptide bonds, thereby polymerizing the amino acids delivered by tRNAs into a polypeptide chain. The nascent polypeptides leave the ribosome through a tunnel in the LSU and interact with protein factors that function in enzymatic processing, targeting, and the membrane insertion of nascent chains at the exit of the ribosomal tunnel. The sequence is that of Large ribosomal subunit protein eL42A from Saccharomyces cerevisiae (strain ATCC 204508 / S288c) (Baker's yeast).